Consider the following 23-residue polypeptide: Defensin-like protein 2 (23 aa).

The residue at position 1 (Gln-1) is a Pyrrolidone carboxylic acid.

Belongs to the DEFL family. Forms oligomers in its native state.

Its function is as follows. Possesses antifungal activity sensitive to inorganic cations. This is Defensin-like protein 2 from Brassica napus (Rape).